Here is a 249-residue protein sequence, read N- to C-terminus: Small ribosomal subunit protein eS6 (249 aa).

Basic residues predominate over residues 223–238; the sequence is LRQRDHSKKHTQKVHA. The interval 223-249 is disordered; the sequence is LRQRDHSKKHTQKVHAQRAEVAAFQKK.

This sequence belongs to the eukaryotic ribosomal protein eS6 family. Component of the small ribosomal subunit. Part of the small subunit (SSU) processome, composed of more than 70 proteins and the RNA chaperone small nucleolar RNA (snoRNA) U3. In terms of processing, ribosomal protein S6 is the major substrate of protein kinases in eukaryote ribosomes.

It is found in the cytoplasm. The protein localises to the nucleus. Its subcellular location is the nucleolus. Its function is as follows. Component of the 40S small ribosomal subunit. Plays an important role in controlling cell growth and proliferation through the selective translation of particular classes of mRNA. Part of the small subunit (SSU) processome, first precursor of the small eukaryotic ribosomal subunit. During the assembly of the SSU processome in the nucleolus, many ribosome biogenesis factors, an RNA chaperone and ribosomal proteins associate with the nascent pre-rRNA and work in concert to generate RNA folding, modifications, rearrangements and cleavage as well as targeted degradation of pre-ribosomal RNA by the RNA exosome. This chain is Small ribosomal subunit protein eS6 (RPS6), found in Leishmania infantum.